A 553-amino-acid chain; its full sequence is MLSVRVAAAVARALPRRAGLVSKNALGSSFIAARNLHASNSRLQKTGTAEVSSILEERILGADTSVDLEETGRVLSIGDGIARVHGLRNVQAEEMVEFSSGLKGMSLNLEPDNVGVVVFGNDKLIKEGDIVKRTGAIVDVPVGEELLGRVVDALGNAIDGKGPIGSKARRRVGLKAPGIIPRISVREPMQTGIKAVDSLVPIGRGQRELIIGDRQTGKTSIAIDTIINQKRFNDGTDEKKKLYCIYVAIGQKRSTVAQLVKRLTDADAMKYTIVVSATASDAAPLQYLAPYSGCSMGEYFRDNGKHALIIYDDLSKQAVAYRQMSLLLRRPPGREAYPGDVFYLHSRLLERAAKMNDAFGGGSLTALPVIETQAGDVSAYIPTNVISITDGQIFLETELFYKGIRPAINVGLSVSRVGSAAQTRAMKQVAGTMKLELAQYREVAAFAQFGSDLDAATQQLLSRGVRLTELLKQGQYSPMAIEEQVAVIYAGVRGYLDKLEPSKITKFENAFLSHVISQHQALLSKIRTDGKISEESDAKLKEIVTNFLAGFEA.

The transit peptide at 1-43 (MLSVRVAAAVARALPRRAGLVSKNALGSSFIAARNLHASNSRL) directs the protein to the mitochondrion. Gln44 carries the post-translational modification Pyrrolidone carboxylic acid. Phosphoserine occurs at positions 53 and 65. A Phosphoserine; alternate modification is found at Ser76. Ser76 carries an O-linked (GlcNAc) serine; alternate glycan. Ser106 is subject to Phosphoserine. 3 positions are modified to N6-acetyllysine: Lys123, Lys126, and Lys132. Thr134 carries the post-translational modification Phosphothreonine. Lys161 is modified (N6-acetyllysine; alternate). The residue at position 161 (Lys161) is an N6-succinyllysine; alternate. Ser166 is modified (phosphoserine). Position 167 is an N6-acetyllysine; alternate (Lys167). Residue Lys167 is modified to N6-succinyllysine; alternate. Ser184 carries the phosphoserine modification. Arg204 carries the omega-N-methylarginine modification. ATP contacts are provided by Gln215, Gly217, Lys218, Thr219, and Ser220. Thr219 serves as a coordination point for Mg(2+). N6-acetyllysine; alternate occurs at positions 230 and 239. N6-succinyllysine; alternate is present on residues Lys230 and Lys239. Lys240 bears the N6-acetyllysine mark. Lys261 and Lys305 each carry N6-acetyllysine; alternate. N6-succinyllysine; alternate is present on residues Lys261 and Lys305. Position 312 (Asp312) interacts with Mg(2+). Residue Lys427 is modified to N6-acetyllysine; alternate. Residue Lys427 is modified to N6-succinyllysine; alternate. Lys434 is subject to N6-acetyllysine. Gln473 and Gln475 together coordinate ATP. An N6-acetyllysine; alternate mark is found at Lys498, Lys506, Lys531, and Lys539. An N6-succinyllysine; alternate mark is found at Lys498, Lys506, Lys531, and Lys539. An N6-acetyllysine modification is found at Lys541.

This sequence belongs to the ATPase alpha/beta chains family. Homotrimer. Component of the ATP synthase complex composed at least of ATP5F1A/subunit alpha, ATP5F1B/subunit beta, ATP5MC1/subunit c (homooctomer), MT-ATP6/subunit a, MT-ATP8/subunit 8, ATP5ME/subunit e, ATP5MF/subunit f, ATP5MG/subunit g, ATP5MK/subunit k, ATP5MJ/subunit j, ATP5F1C/subunit gamma, ATP5F1D/subunit delta, ATP5F1E/subunit epsilon, ATP5PF/subunit F6, ATP5PB/subunit b, ATP5PD/subunit d, ATP5PO/subunit OSCP. ATP synthase complex consists of a soluble F(1) head domain (subunits alpha(3) and beta(3)) - the catalytic core - and a membrane F(0) domain - the membrane proton channel (subunits c, a, 8, e, f, g, k and j). These two domains are linked by a central stalk (subunits gamma, delta, and epsilon) rotating inside the F1 region and a stationary peripheral stalk (subunits F6, b, d, and OSCP). Interacts with ATPAF2. Interacts with HRG; the interaction occurs on the surface of T-cells and alters the cell morphology when associated with concanavalin (in vitro). Interacts with PLG (angiostatin peptide); the interaction inhibits most of the angiogenic properties of angiostatin. Interacts with BLOC1S1. Interacts with BCL2L1 isoform BCL-X(L); the interaction mediates the association of BCL2L1 isoform BCL-X(L) with the mitochondrial membrane F(1)F(0) ATP synthase and enhances neurons metabolic efficiency. Interacts with CLN5 and PPT1. Interacts with S100A1; this interaction increases F1-ATPase activity. Interacts with ABCB7; this interaction allows the regulation of cellular iron homeostasis and cellular reactive oxygen species (ROS) levels in cardiomyocytes. In terms of processing, acetylated on lysine residues. BLOC1S1 is required for acetylation. In terms of tissue distribution, heart muscle (at protein level). Heart and liver.

Its subcellular location is the mitochondrion inner membrane. It localises to the cell membrane. Subunit alpha, of the mitochondrial membrane ATP synthase complex (F(1)F(0) ATP synthase or Complex V) that produces ATP from ADP in the presence of a proton gradient across the membrane which is generated by electron transport complexes of the respiratory chain. ATP synthase complex consist of a soluble F(1) head domain - the catalytic core - and a membrane F(1) domain - the membrane proton channel. These two domains are linked by a central stalk rotating inside the F(1) region and a stationary peripheral stalk. During catalysis, ATP synthesis in the catalytic domain of F(1) is coupled via a rotary mechanism of the central stalk subunits to proton translocation. In vivo, can only synthesize ATP although its ATP hydrolase activity can be activated artificially in vitro. With the catalytic subunit beta (ATP5F1B), forms the catalytic core in the F(1) domain. Subunit alpha does not bear the catalytic high-affinity ATP-binding sites. The sequence is that of ATP synthase F(1) complex subunit alpha, mitochondrial from Bos taurus (Bovine).